Here is a 185-residue protein sequence, read N- to C-terminus: Small ribosomal subunit protein uS5 (185 aa).

An S5 DRBM domain is found at 18 to 81 (FVDKLVHINR…ESAKRALIRV (64 aa)).

The protein belongs to the universal ribosomal protein uS5 family. In terms of assembly, part of the 30S ribosomal subunit. Contacts proteins S4 and S8.

Its function is as follows. With S4 and S12 plays an important role in translational accuracy. In terms of biological role, located at the back of the 30S subunit body where it stabilizes the conformation of the head with respect to the body. The sequence is that of Small ribosomal subunit protein uS5 from Azorhizobium caulinodans (strain ATCC 43989 / DSM 5975 / JCM 20966 / LMG 6465 / NBRC 14845 / NCIMB 13405 / ORS 571).